Reading from the N-terminus, the 182-residue chain is UPF0149 protein CGSHiGG_07585 (182 aa).

Belongs to the UPF0149 family.

This is UPF0149 protein CGSHiGG_07585 from Haemophilus influenzae (strain PittGG).